We begin with the raw amino-acid sequence, 571 residues long: MDRAVSRVALENEEREAKNTWRFVFRIAILLLIVITLAISAAALVYSMEASTPGDLVGIPTVISRAEEKITSALSSNQDVVDRIYKQVALESPLALLNTESVIMNAITSLSYQINGAANNSGCGAPVHDPDYIGGIGKELIVDDASDVTSFYPSAFQEHLNFIPAPTTGSGCTRIPSFDISATHYCYTHNVILSGCRDHSHSHQYLALGVLRTSATGRVFFSTLRSINLDDNQNRKSCSVSATPLGCDMLCSKITETEEEDYSSVTPTSMVHGRLGFDGQYHEKDLDVITLFKDWVANYPGVGGGSFIDNRVWFPVYGGLKPNSPSDTVQEGRYVIYKRYNDTCPDEQDYQIRMAKSSYKPGRFGGKRVQQAILSIKVSTSLGEDPVLTIPPNTVTLMGAEGRVLTVGTSHFLYQRGSSYFSPALLYPMTVNNKTATLHSPYTFNAFTRPGSVPCQASARCPNSCVTGVYTDPYPLIFHRNHTLRGVFGTMLDDGQARLNPVSAVFDNISRSRITRVSSSRTKAAYTTSTCFKVVKTNKTYVLSIAEISNTLFGEFRIVPLLVEILKNDGV.

Residues 1–26 (MDRAVSRVALENEEREAKNTWRFVFR) lie on the Intravirion side of the membrane. A helical membrane pass occupies residues 27-47 (IAILLLIVITLAISAAALVYS). The Virion surface segment spans residues 48-571 (MEASTPGDLV…LVEILKNDGV (524 aa)). A glycan (N-linked (GlcNAc...) asparagine; by host) is linked at Asn119. The important for interaction with fusion/F protein stretch occupies residues 124 to 152 (GAPVHDPDYIGGIGKELIVDDASDVTSFY). 3 disulfides stabilise this stretch: Cys172–Cys196, Cys186–Cys247, and Cys238–Cys251. Positions 234–239 (NRKSCS) are involved in neuraminidase activity. N-linked (GlcNAc...) asparagine; by host glycans are attached at residues Asn341 and Asn433. 2 disulfides stabilise this stretch: Cys344-Cys461 and Cys455-Cys465. N-linked (GlcNAc...) asparagine; by host glycans are attached at residues Asn481, Asn508, and Asn538.

Belongs to the paramyxoviruses hemagglutinin-neuraminidase family. As to quaternary structure, homotetramer; composed of disulfide-linked homodimers. Interacts with F protein trimer. Interacts with host CG-1B; this interaction inhibits viral adsorption and replication rather than internalization.

Its subcellular location is the virion membrane. The protein localises to the host cell membrane. It catalyses the reaction Hydrolysis of alpha-(2-&gt;3)-, alpha-(2-&gt;6)-, alpha-(2-&gt;8)- glycosidic linkages of terminal sialic acid residues in oligosaccharides, glycoproteins, glycolipids, colominic acid and synthetic substrates.. Mediates the viral entry into the host cell together with fusion/F protein. Attaches the virus to sialic acid-containing cell receptors and thereby initiates infection. Binding of HN protein to the receptor induces a conformational change that allows the F protein to trigger virion/cell membranes fusion. Its function is as follows. Neuraminidase activity ensures the efficient spread of the virus by dissociating the mature virions from the neuraminic acid containing glycoproteins. The protein is Hemagglutinin-neuraminidase (HN) of Gallus gallus (Chicken).